We begin with the raw amino-acid sequence, 104 residues long: Large ribosomal subunit protein uL24 (104 aa).

Belongs to the universal ribosomal protein uL24 family. As to quaternary structure, part of the 50S ribosomal subunit.

In terms of biological role, one of two assembly initiator proteins, it binds directly to the 5'-end of the 23S rRNA, where it nucleates assembly of the 50S subunit. Its function is as follows. One of the proteins that surrounds the polypeptide exit tunnel on the outside of the subunit. This is Large ribosomal subunit protein uL24 from Flavobacterium johnsoniae (strain ATCC 17061 / DSM 2064 / JCM 8514 / BCRC 14874 / CCUG 350202 / NBRC 14942 / NCIMB 11054 / UW101) (Cytophaga johnsonae).